We begin with the raw amino-acid sequence, 91 residues long: Small ribosomal subunit protein bS20 (91 aa).

The segment at 1 to 23 (MANTPSAKKRAKQAEKRRSHNAS) is disordered. Over residues 7 to 20 (AKKRAKQAEKRRSH) the composition is skewed to basic residues.

This sequence belongs to the bacterial ribosomal protein bS20 family.

Functionally, binds directly to 16S ribosomal RNA. The polypeptide is Small ribosomal subunit protein bS20 (Pseudomonas aeruginosa (strain LESB58)).